Consider the following 443-residue polypeptide: D(2) dopamine receptor (443 aa).

Topologically, residues 1-37 (MDPLNLSWYDDDPESRNWSRPFNGSEGKVGKPHYNYY) are extracellular. N-linked (GlcNAc...) asparagine glycans are attached at residues Asn5, Asn17, and Asn23. The chain crosses the membrane as a helical span at residues 38-60 (AMLLTLLIFVIVFGNVLVCMAVS). Topologically, residues 61 to 70 (REKALQTTTN) are cytoplasmic. Residues 71–93 (YLIVSLAVADLLVATLVMPWVVY) traverse the membrane as a helical segment. Residues 94 to 108 (LEVVGEWKFSRIHCD) are Extracellular-facing. Cys107 and Cys182 are disulfide-bonded. The helical transmembrane segment at 109–130 (IFVTLDVMMCTASILNLCAISI) threads the bilayer. The Cytoplasmic segment spans residues 131–151 (DRYTAVAMPMLYNTRYSSKRR). Residues 152–172 (VTVMIAIVWVLSFTISCPLLF) traverse the membrane as a helical segment. The Extracellular segment spans residues 173 to 188 (GLNNTDQNECIIANPA). Residues 189-213 (FVVYSSVVSFYVPFIVTLLVYIKIY) traverse the membrane as a helical segment. Residues 211-373 (KIYIVLRRRR…SQQKEKKATQ (163 aa)) form an interaction with PPP1R9B region. Over 214–373 (IVLRRRRKRV…SQQKEKKATQ (160 aa)) the chain is Cytoplasmic. The interval 282 to 331 (EMLSSTSPPERTRYSPIPPSHHQLTLPDPSHHGLHSTANSPVKPEKNGHA) is disordered. Residues 374-395 (MLAIVLGVFIICWLPFFITHIL) form a helical membrane-spanning segment. Residues 396–409 (NIHCDCNIPPVLYS) lie on the Extracellular side of the membrane. A disulfide bond links Cys399 and Cys401. A helical transmembrane segment spans residues 410 to 431 (AFTWLGYVNSAVNPIIYTTFNV). Residues 432 to 443 (EFRKAFMKILHC) are Cytoplasmic-facing. A lipid anchor (S-palmitoyl cysteine) is attached at Cys443.

The protein belongs to the G-protein coupled receptor 1 family. Forms homo- and heterooligomers with DRD4. The interaction with DRD4 may modulate agonist-induced downstream signaling. Interacts with CADPS and CADPS2. Interacts with GPRASP1, PPP1R9B and CLIC6. Interacts with ARRB2. Interacts with HTR2A. Interacts with DRD1. Interacts with KCNA2. In terms of processing, palmitoylated. Palmitoylation which is required for proper localization to the plasma membrane and stability of the receptor could be carried on by ZDHHC4, ZDHHC3 and ZDHHC8.

It localises to the cell membrane. The protein resides in the golgi apparatus membrane. Dopamine receptor whose activity is mediated by G proteins which inhibit adenylyl cyclase. Positively regulates postnatal regression of retinal hyaloid vessels via suppression of VEGFR2/KDR activity, downstream of OPN5. The polypeptide is D(2) dopamine receptor (DRD2) (Mustela putorius furo (European domestic ferret)).